Consider the following 108-residue polypeptide: UPF0060 membrane protein YnfA (108 aa).

Residues 1 to 5 (MIKTT) lie on the Periplasmic side of the membrane. The helical transmembrane segment at 6-26 (LLFFATALCEIIGCFLPWLWL) threads the bilayer. Topologically, residues 27-30 (KRNA) are cytoplasmic. The chain crosses the membrane as a helical span at residues 31 to 51 (SIWLLLPAGISLALFVWLLTL). Residues 52–60 (HPAASGRVY) lie on the Periplasmic side of the membrane. Residues 61-81 (AAYGGVYVCTALIWLRVVDGV) form a helical membrane-spanning segment. The Cytoplasmic portion of the chain corresponds to 82 to 84 (KLT). A helical membrane pass occupies residues 85 to 105 (LYDWTGALIALCGMLIIVAGW). Residues 106–108 (GRT) are Periplasmic-facing.

Belongs to the UPF0060 family.

The protein resides in the cell inner membrane. This Escherichia coli O127:H6 (strain E2348/69 / EPEC) protein is UPF0060 membrane protein YnfA.